The sequence spans 450 residues: Proline--tRNA ligase (450 aa).

It belongs to the class-II aminoacyl-tRNA synthetase family. ProS type 2 subfamily. Homodimer.

The protein localises to the cytoplasm. The enzyme catalyses tRNA(Pro) + L-proline + ATP = L-prolyl-tRNA(Pro) + AMP + diphosphate. Catalyzes the attachment of proline to tRNA(Pro) in a two-step reaction: proline is first activated by ATP to form Pro-AMP and then transferred to the acceptor end of tRNA(Pro). This chain is Proline--tRNA ligase, found in Paracoccus denitrificans (strain Pd 1222).